Reading from the N-terminus, the 96-residue chain is NADH-ubiquinone oxidoreductase chain 4L (96 aa).

The next 3 membrane-spanning stretches (helical) occupy residues 2–22 (IMFLYSSFSMILFILGLFCFV), 28–48 (LLSMLLSLEFIVLILFFMLFI), and 62–82 (MFLTFSVCEGALGLSILVSMI).

Belongs to the complex I subunit 4L family.

The protein resides in the mitochondrion membrane. It catalyses the reaction a ubiquinone + NADH + 5 H(+)(in) = a ubiquinol + NAD(+) + 4 H(+)(out). Functionally, core subunit of the mitochondrial membrane respiratory chain NADH dehydrogenase (Complex I) that is believed to belong to the minimal assembly required for catalysis. Complex I functions in the transfer of electrons from NADH to the respiratory chain. The immediate electron acceptor for the enzyme is believed to be ubiquinone. This chain is NADH-ubiquinone oxidoreductase chain 4L (mt:ND4L), found in Drosophila nasuta F (Fruit fly).